Here is an 80-residue protein sequence, read N- to C-terminus: MAVKERVGVVVSDKMDKTVVVAIENRSPHPKYGKIVVKTQKFKAHDAENQAKQGDRVRIRETRPLSKTKRWEVAEILTDS.

The protein belongs to the universal ribosomal protein uS17 family. As to quaternary structure, part of the 30S ribosomal subunit.

In terms of biological role, one of the primary rRNA binding proteins, it binds specifically to the 5'-end of 16S ribosomal RNA. This Microcystis aeruginosa (strain NIES-843 / IAM M-2473) protein is Small ribosomal subunit protein uS17.